Reading from the N-terminus, the 246-residue chain is Ribonuclease 3 (246 aa).

An RNase III domain is found at 30 to 152; the sequence is ISWIEKNLGH…MIGAIFLESG (123 aa). Position 65 (Glu65) interacts with Mg(2+). Residue Asp69 is part of the active site. 2 residues coordinate Mg(2+): Asp138 and Glu141. Glu141 is a catalytic residue. The region spanning 177–246 is the DRBM domain; sequence HPKSALQEWA…AQALLDILAQ (70 aa).

The protein belongs to the ribonuclease III family. In terms of assembly, homodimer. Mg(2+) is required as a cofactor.

The protein resides in the cytoplasm. The catalysed reaction is Endonucleolytic cleavage to 5'-phosphomonoester.. Functionally, digests double-stranded RNA. Involved in the processing of primary rRNA transcript to yield the immediate precursors to the large and small rRNAs (23S and 16S). Processes some mRNAs, and tRNAs when they are encoded in the rRNA operon. Processes pre-crRNA and tracrRNA of type II CRISPR loci if present in the organism. In Zymomonas mobilis subsp. mobilis (strain ATCC 31821 / ZM4 / CP4), this protein is Ribonuclease 3.